The primary structure comprises 203 residues: Urease accessory protein UreG (203 aa).

Residue 14–21 (GPVGSGKT) coordinates GTP.

It belongs to the SIMIBI class G3E GTPase family. UreG subfamily. As to quaternary structure, homodimer. UreD, UreF and UreG form a complex that acts as a GTP-hydrolysis-dependent molecular chaperone, activating the urease apoprotein by helping to assemble the nickel containing metallocenter of UreC. The UreE protein probably delivers the nickel.

It is found in the cytoplasm. Facilitates the functional incorporation of the urease nickel metallocenter. This process requires GTP hydrolysis, probably effectuated by UreG. The chain is Urease accessory protein UreG from Rhizobium rhizogenes (strain K84 / ATCC BAA-868) (Agrobacterium radiobacter).